A 485-amino-acid polypeptide reads, in one-letter code: Bifunctional protein GlmU (485 aa).

Positions 1–241 (MSASDFSSAV…ARELAGVNDR (241 aa)) are pyrophosphorylase. UDP-N-acetyl-alpha-D-glucosamine-binding positions include 13-16 (LAAG), lysine 27, glutamine 84, and 89-90 (GT). Aspartate 114 lines the Mg(2+) pocket. UDP-N-acetyl-alpha-D-glucosamine contacts are provided by glycine 151, glutamate 166, asparagine 181, and asparagine 239. Position 239 (asparagine 239) interacts with Mg(2+). The tract at residues 242 to 262 (VQLAEAGAELNRRTVIAAMRG) is linker. An N-acetyltransferase region spans residues 263-485 (GATIVDPATT…AAQNVHNQEG (223 aa)). Residues arginine 344 and lysine 362 each contribute to the UDP-N-acetyl-alpha-D-glucosamine site. Catalysis depends on histidine 374, which acts as the Proton acceptor. UDP-N-acetyl-alpha-D-glucosamine is bound by residues tyrosine 377 and asparagine 388. Acetyl-CoA-binding positions include alanine 391, 397-398 (NY), serine 416, and alanine 434. A disordered region spans residues 465–485 (RPGTAAAQAAEAAQNVHNQEG). Low complexity predominate over residues 469–478 (AAAQAAEAAQ).

This sequence in the N-terminal section; belongs to the N-acetylglucosamine-1-phosphate uridyltransferase family. It in the C-terminal section; belongs to the transferase hexapeptide repeat family. As to quaternary structure, homotrimer. Mg(2+) is required as a cofactor.

It localises to the cytoplasm. It catalyses the reaction alpha-D-glucosamine 1-phosphate + acetyl-CoA = N-acetyl-alpha-D-glucosamine 1-phosphate + CoA + H(+). The enzyme catalyses N-acetyl-alpha-D-glucosamine 1-phosphate + UTP + H(+) = UDP-N-acetyl-alpha-D-glucosamine + diphosphate. It participates in nucleotide-sugar biosynthesis; UDP-N-acetyl-alpha-D-glucosamine biosynthesis; N-acetyl-alpha-D-glucosamine 1-phosphate from alpha-D-glucosamine 6-phosphate (route II): step 2/2. The protein operates within nucleotide-sugar biosynthesis; UDP-N-acetyl-alpha-D-glucosamine biosynthesis; UDP-N-acetyl-alpha-D-glucosamine from N-acetyl-alpha-D-glucosamine 1-phosphate: step 1/1. It functions in the pathway bacterial outer membrane biogenesis; LPS lipid A biosynthesis. In terms of biological role, catalyzes the last two sequential reactions in the de novo biosynthetic pathway for UDP-N-acetylglucosamine (UDP-GlcNAc). The C-terminal domain catalyzes the transfer of acetyl group from acetyl coenzyme A to glucosamine-1-phosphate (GlcN-1-P) to produce N-acetylglucosamine-1-phosphate (GlcNAc-1-P), which is converted into UDP-GlcNAc by the transfer of uridine 5-monophosphate (from uridine 5-triphosphate), a reaction catalyzed by the N-terminal domain. The chain is Bifunctional protein GlmU from Corynebacterium glutamicum (strain ATCC 13032 / DSM 20300 / JCM 1318 / BCRC 11384 / CCUG 27702 / LMG 3730 / NBRC 12168 / NCIMB 10025 / NRRL B-2784 / 534).